The primary structure comprises 77 residues: Small ribosomal subunit protein bS18 (77 aa).

It belongs to the bacterial ribosomal protein bS18 family. In terms of assembly, part of the 30S ribosomal subunit. Forms a tight heterodimer with protein bS6.

Binds as a heterodimer with protein bS6 to the central domain of the 16S rRNA, where it helps stabilize the platform of the 30S subunit. This chain is Small ribosomal subunit protein bS18, found in Halalkalibacterium halodurans (strain ATCC BAA-125 / DSM 18197 / FERM 7344 / JCM 9153 / C-125) (Bacillus halodurans).